A 49-amino-acid polypeptide reads, in one-letter code: Large ribosomal subunit protein bL33B (49 aa).

It belongs to the bacterial ribosomal protein bL33 family.

The chain is Large ribosomal subunit protein bL33B (rpmGB) from Bacillus licheniformis.